A 491-amino-acid polypeptide reads, in one-letter code: Cytosolic Fe-S cluster assembly factor NAR1 (491 aa).

[4Fe-4S] cluster is bound by residues C20, C65, C68, C71, C177, C232, C414, and C418.

It belongs to the NARF family.

Functionally, component of the cytosolic Fe/S protein assembly machinery. Required for maturation of extramitochondrial Fe/S proteins. May play a role in the transfer of pre-assembled Fe/S clusters to target apoproteins. This is Cytosolic Fe-S cluster assembly factor NAR1 (NAR1) from Yarrowia lipolytica (strain CLIB 122 / E 150) (Yeast).